The following is a 541-amino-acid chain: Mesoderm induction early response protein 2 (541 aa).

Ser11 carries the post-translational modification Phosphoserine. Disordered stretches follow at residues 100-119 (DPISEQESEGGDTAPALPDM) and 131-186 (LSGE…EEDA). Residues 140–165 (QSSADDLTPSVTSHEASDLFHNQSGS) are compositionally biased toward polar residues. In terms of domain architecture, ELM2 spans 194-291 (KEIMVGPQFQ…EALRRLRFNV (98 aa)). One can recognise an SANT domain in the interval 296–348 (DGLCAWSEEECRNFEHGFRVHGKNFHLIQANKVRTRSVGECVEYYYLWKKSER). The disordered stretch occupies residues 364 to 440 (VSSGTTDTEQ…EPPAVPSLQQ (77 aa)).

Part of a complex containing at least CDYL, MIER1, MIER2, HDAC1 and HDAC2.

It localises to the nucleus. Functionally, transcriptional repressor. In Mus musculus (Mouse), this protein is Mesoderm induction early response protein 2 (Mier2).